The chain runs to 578 residues: GTP diphosphokinase CRSH3, chloroplastic (578 aa).

The transit peptide at 1–45 (MANAGVNETVAVAVAIDAPGVGHDHGAAGEVRRPSTRRLAPAGSG) directs the protein to the chloroplast. The region spanning 99–199 (SVSRALVVAA…LELAVKLDAM (101 aa)) is the HD domain. EF-hand domains follow at residues 468–503 (ATAGNVERAFQLLDKNGDGRISMEELTEIMEDLGAG) and 506–537 (DAEELMRLLDANSDGSLSSDEFALFQKRVKLK). The Ca(2+) site is built by Asp-481, Asn-483, Asp-485, Arg-487, Glu-492, Asp-515, Asn-517, Asp-519, Ser-521, and Glu-526.

The protein belongs to the RelA/SpoT family. Expressed in roots and shoots.

It localises to the plastid. The protein resides in the chloroplast. The catalysed reaction is GTP + ATP = guanosine 3'-diphosphate 5'-triphosphate + AMP. With respect to regulation, activated by calcium. In terms of biological role, possesses calcium-dependent ppGpp (guanosine 3'-diphosphate 5'-diphosphate) synthetase activity in vitro and is able to functionally complement E.coli relA mutants. May be involved in a rapid plant ppGpp-mediated response to pathogens and other stresses. The protein is GTP diphosphokinase CRSH3, chloroplastic of Oryza sativa subsp. japonica (Rice).